The sequence spans 1018 residues: Transmembrane protein 132A (1018 aa).

The first 32 residues, 1–32 (MTERKAAAPRGPYGAWFCLLVALALEVVRVSS), serve as a signal peptide directing secretion. The Extracellular portion of the chain corresponds to 33–846 (NHDTLDPIYL…VTDLELGMYA (814 aa)). A glycan (N-linked (GlcNAc...) asparagine) is linked at Asn-276. The segment at 606–911 (IEVRSPLSDA…QLDRCSSSGP (306 aa)) is binds to HSPA5/GRP78. The tract at residues 666 to 1018 (LPAPKQEVAL…NYMERIRGSS (353 aa)) is confers cellular localization similar to full-length form. Over residues 807–818 (ERAEEEAGKEEN) the composition is skewed to basic and acidic residues. The disordered stretch occupies residues 807–833 (ERAEEEAGKEENEAKEEEEDEEEMVPA). The span at 819–830 (EAKEEEEDEEEM) shows a compositional bias: acidic residues. The helical transmembrane segment at 847 to 867 (LLGIFCLAILIFLVNGVVFVL) threads the bilayer. Topologically, residues 868 to 1018 (RYQRKEPPDS…NYMERIRGSS (151 aa)) are cytoplasmic. Positions 900–956 (SRQLDRCSSSGPPKGEGGCPCESGAGGDASTVAPSASESPAGSSSTLARKEAGGRRK) are disordered. Low complexity-rich tracts occupy residues 906-922 (CSSS…PCES) and 932-944 (APSA…GSSS).

The protein belongs to the TMEM132 family. In terms of assembly, interacts with HSPA5/GRP78.

Its subcellular location is the golgi apparatus membrane. The protein resides in the endoplasmic reticulum membrane. In terms of biological role, may play a role in embryonic and postnatal development of the brain. Increased resistance to cell death induced by serum starvation in cultured cells. Regulates cAMP-induced GFAP gene expression via STAT3 phosphorylation. The protein is Transmembrane protein 132A (Tmem132a) of Mus musculus (Mouse).